The sequence spans 406 residues: MSTFPAPVLGTPLSPTATRVMLLGAGELGKEVVIALQRLGVEVIAVDRYADAPGHQVAHRAHVVSMTDPQALRQVIEQERPHVVVPEIEAIATDLLVALEDEGAVRVTPTARAAHLTMNREGIHRLAAETLGLPTSPYRFVDTEQALREAIDGGIGYPCVIKPVMSSSGKGQSIIRSADDIAAAWRYAQEGGRVGAGRVIVEGFIEFDYEITLLTVRARGADGQIVTQFCEPIGHRQVDGDYVESWQPHPMSPAALQRSREIALAVTGDLGGLGIFGVELFVAGDQVWFSEVSPRPHDTGMVTLISQVQNEFELHARALLGLPVDTRLRQPGASSVIYGGVEARGVAFEGVAQALAEPGTDIRLFGKPESFAKRRMGVGLAVADDVDQARAKAARVSQAVRVRAGA.

N(1)-(5-phospho-beta-D-ribosyl)glycinamide is bound by residues 27–28 and glutamate 87; that span reads EL. ATP contacts are provided by residues arginine 120, lysine 162, 167–172, 202–205, and glutamate 210; these read SSGKGQ and EGFI. Residues 125 to 320 enclose the ATP-grasp domain; sequence RLAAETLGLP…EFELHARALL (196 aa). Glutamate 279 and glutamate 291 together coordinate Mg(2+). N(1)-(5-phospho-beta-D-ribosyl)glycinamide contacts are provided by residues aspartate 298, lysine 367, and 374 to 375; that span reads RR.

The protein belongs to the PurK/PurT family. In terms of assembly, homodimer.

The catalysed reaction is N(1)-(5-phospho-beta-D-ribosyl)glycinamide + formate + ATP = N(2)-formyl-N(1)-(5-phospho-beta-D-ribosyl)glycinamide + ADP + phosphate + H(+). It functions in the pathway purine metabolism; IMP biosynthesis via de novo pathway; N(2)-formyl-N(1)-(5-phospho-D-ribosyl)glycinamide from N(1)-(5-phospho-D-ribosyl)glycinamide (formate route): step 1/1. Its function is as follows. Involved in the de novo purine biosynthesis. Catalyzes the transfer of formate to 5-phospho-ribosyl-glycinamide (GAR), producing 5-phospho-ribosyl-N-formylglycinamide (FGAR). Formate is provided by PurU via hydrolysis of 10-formyl-tetrahydrofolate. The polypeptide is Formate-dependent phosphoribosylglycinamide formyltransferase (Bordetella parapertussis (strain 12822 / ATCC BAA-587 / NCTC 13253)).